The chain runs to 1673 residues: Glutamine and serine-rich protein 1 (1673 aa).

Disordered stretches follow at residues 265-322 (VIPS…SSQA), 411-543 (DQTR…KSYV), 872-892 (RHMSPNFTPPKPQNMNNLSIN), 923-961 (QDLPSGMVSPVPGANQDDHEKNSENIKNPPNVNQEPKEG), 1050-1081 (DENANLKQIKRNMPLKRSVSKGPDVPGAQYSS), 1149-1182 (VIRPPCPGPLSPQSVAGAPVSDSGSASPPKKAEE), 1216-1272 (LSAL…EQLA), and 1390-1476 (KSKV…PPPI). A compositionally biased stretch (polar residues) spans 289 to 309 (SSKTPKSQSVVSPELTQSYTK). Low complexity-rich tracts occupy residues 310-322 (SSQNQSSVNSSQA) and 411-458 (DQTR…PSDS). The span at 459 to 539 (YTSGQNQTLA…MQNSRTTADS (81 aa)) shows a compositional bias: polar residues. Positions 947–956 (NIKNPPNVNQ) are enriched in polar residues. Residues 1222–1233 (NSEKRLKTEGDK) are compositionally biased toward basic and acidic residues. 2 stretches are compositionally biased toward polar residues: residues 1259 to 1272 (KPSQPEATQPEQLA) and 1397 to 1411 (ARTTHTKASGGSKVS). Positions 1435–1451 (TKAEPPPKKRKQWKEEF) are enriched in basic and acidic residues. Over residues 1452 to 1462 (SSSQSDSSPDM) the composition is skewed to low complexity.

Its subcellular location is the chromosome. Functionally, plays an essential role in the protection and maintenance of transcriptional and developmental programs. Protects many bivalent promoters and poised enhancers from hypermethylation, showing a marked preference for these regulatory elements over other types of promoters or enhancers. Mechanistically, cooperates with tet1 and binds to DNA in a common complex to inhibit the binding of dnmt3a/3b and therefore de novo methylation. This is Glutamine and serine-rich protein 1 (qser1) from Xenopus laevis (African clawed frog).